The following is a 473-amino-acid chain: Bifunctional protein HldE (473 aa).

Positions 1–317 (MKLSMPRFDQ…RRAIQREEGS (317 aa)) are ribokinase. 194–197 (NLSE) is a binding site for ATP. Asp-263 is an active-site residue. The tract at residues 343-473 (FTNGCFDILH…TAIVEKIRKN (131 aa)) is cytidylyltransferase.

It in the N-terminal section; belongs to the carbohydrate kinase PfkB family. In the C-terminal section; belongs to the cytidylyltransferase family. As to quaternary structure, homodimer.

It catalyses the reaction D-glycero-beta-D-manno-heptose 7-phosphate + ATP = D-glycero-beta-D-manno-heptose 1,7-bisphosphate + ADP + H(+). The catalysed reaction is D-glycero-beta-D-manno-heptose 1-phosphate + ATP + H(+) = ADP-D-glycero-beta-D-manno-heptose + diphosphate. It functions in the pathway nucleotide-sugar biosynthesis; ADP-L-glycero-beta-D-manno-heptose biosynthesis; ADP-L-glycero-beta-D-manno-heptose from D-glycero-beta-D-manno-heptose 7-phosphate: step 1/4. It participates in nucleotide-sugar biosynthesis; ADP-L-glycero-beta-D-manno-heptose biosynthesis; ADP-L-glycero-beta-D-manno-heptose from D-glycero-beta-D-manno-heptose 7-phosphate: step 3/4. Functionally, catalyzes the phosphorylation of D-glycero-D-manno-heptose 7-phosphate at the C-1 position to selectively form D-glycero-beta-D-manno-heptose-1,7-bisphosphate. Catalyzes the ADP transfer from ATP to D-glycero-beta-D-manno-heptose 1-phosphate, yielding ADP-D-glycero-beta-D-manno-heptose. The polypeptide is Bifunctional protein HldE (Pseudomonas putida (strain W619)).